Here is a 129-residue protein sequence, read N- to C-terminus: Sulfurtransferase TusD (129 aa).

C79 serves as the catalytic Cysteine persulfide intermediate.

This sequence belongs to the DsrE/TusD family. As to quaternary structure, heterohexamer, formed by a dimer of trimers. The hexameric TusBCD complex contains 2 copies each of TusB, TusC and TusD. The TusBCD complex interacts with TusE.

Its subcellular location is the cytoplasm. Its function is as follows. Part of a sulfur-relay system required for 2-thiolation of 5-methylaminomethyl-2-thiouridine (mnm(5)s(2)U) at tRNA wobble positions. Accepts sulfur from TusA and transfers it in turn to TusE. The polypeptide is Sulfurtransferase TusD (Pectobacterium atrosepticum (strain SCRI 1043 / ATCC BAA-672) (Erwinia carotovora subsp. atroseptica)).